Here is a 613-residue protein sequence, read N- to C-terminus: Cilia- and flagella-associated protein 100 (613 aa).

The tract at residues Lys-36–Asn-55 is disordered. Residues Gly-45 to Asn-55 are compositionally biased toward polar residues. Coiled coils occupy residues Ala-167–Lys-198, Val-233–Lys-260, Phe-396–Val-435, and Gly-504–Lys-580.

It belongs to the CFAP100 family.

The protein localises to the cytoplasm. It is found in the cytoskeleton. The protein resides in the cilium axoneme. May play a role in ciliary/flagellar motility by regulating the assembly and the activity of axonemal inner dynein arm. This is Cilia- and flagella-associated protein 100 from Mus musculus (Mouse).